A 118-amino-acid polypeptide reads, in one-letter code: UPF0102 protein RHA1_ro06551 (118 aa).

It belongs to the UPF0102 family.

The sequence is that of UPF0102 protein RHA1_ro06551 from Rhodococcus jostii (strain RHA1).